Consider the following 509-residue polypeptide: uncharacterized protein (509 aa).

In terms of domain architecture, G spans 108–225 (GKSSLCNLLA…KRHKPLFPVI (118 aa)).

This is an uncharacterized protein from Acinetobacter baylyi (strain ATCC 33305 / BD413 / ADP1).